The primary structure comprises 236 residues: MAFRALTTKAAARPLLALGPRSVAMGARYMSTPAPQDPKSKAAAILDSLPGSTALSKTGILATSAAAAIYAISNELYVLNAETILLCTFTGFSFLIAKLVAPAYKEYADKRMQHVSGILNSSRNKHVAAVKERIESVSELKNVTETTKVLFEVSKETLELEAKAFELKQKVDLATEAKAVLDSWVRYEASVRQLQQKQIAESVIGKVQAELANPKFQDKVLQQSVADVEKLFASLK.

A mitochondrion-targeting transit peptide spans 1–29 (MAFRALTTKAAARPLLALGPRSVAMGARY).

It belongs to the eukaryotic ATPase subunit B family. F-type ATPases have 2 components, CF(1) - the catalytic core - and CF(0) - the membrane proton channel. In yeast, the dimeric form of ATP synthase consists of 17 polypeptides: alpha, beta, gamma, delta, epsilon, 4 (B), 5 (OSCP), 6 (A), 8, 9 (C), d, E (Tim11), f, g, h, i/j and k.

It is found in the mitochondrion. Its subcellular location is the mitochondrion inner membrane. Functionally, mitochondrial membrane ATP synthase (F(1)F(0) ATP synthase or Complex V) produces ATP from ADP in the presence of a proton gradient across the membrane which is generated by electron transport complexes of the respiratory chain. F-type ATPases consist of two structural domains, F(1) - containing the extramembraneous catalytic core, and F(0) - containing the membrane proton channel, linked together by a central stalk and a peripheral stalk. During catalysis, ATP synthesis in the catalytic domain of F(1) is coupled via a rotary mechanism of the central stalk subunits to proton translocation. Part of the complex F(0) domain and the peripheric stalk, which acts as a stator to hold the catalytic alpha(3)beta(3) subcomplex and subunit a/ATP6 static relative to the rotary elements. The sequence is that of ATP synthase subunit 4, mitochondrial (ATP4) from Eremothecium gossypii (strain ATCC 10895 / CBS 109.51 / FGSC 9923 / NRRL Y-1056) (Yeast).